The sequence spans 429 residues: Enolase (429 aa).

A (2R)-2-phosphoglycerate-binding site is contributed by Q163. The active-site Proton donor is E205. Mg(2+)-binding residues include D242, E285, and D312. Residues K337, R366, S367, and K388 each coordinate (2R)-2-phosphoglycerate. The Proton acceptor role is filled by K337.

The protein belongs to the enolase family. Component of the RNA degradosome, a multiprotein complex involved in RNA processing and mRNA degradation. Requires Mg(2+) as cofactor.

The protein localises to the cytoplasm. The protein resides in the secreted. It localises to the cell surface. It carries out the reaction (2R)-2-phosphoglycerate = phosphoenolpyruvate + H2O. It participates in carbohydrate degradation; glycolysis; pyruvate from D-glyceraldehyde 3-phosphate: step 4/5. Functionally, catalyzes the reversible conversion of 2-phosphoglycerate (2-PG) into phosphoenolpyruvate (PEP). It is essential for the degradation of carbohydrates via glycolysis. The chain is Enolase from Alkalilimnicola ehrlichii (strain ATCC BAA-1101 / DSM 17681 / MLHE-1).